The primary structure comprises 461 residues: L-seryl-tRNA(Sec) selenium transferase (461 aa).

Residue Lys-294 is modified to N6-(pyridoxal phosphate)lysine.

This sequence belongs to the SelA family. It depends on pyridoxal 5'-phosphate as a cofactor.

The protein localises to the cytoplasm. The catalysed reaction is L-seryl-tRNA(Sec) + selenophosphate + H(+) = L-selenocysteinyl-tRNA(Sec) + phosphate. Its pathway is aminoacyl-tRNA biosynthesis; selenocysteinyl-tRNA(Sec) biosynthesis; selenocysteinyl-tRNA(Sec) from L-seryl-tRNA(Sec) (bacterial route): step 1/1. Its function is as follows. Converts seryl-tRNA(Sec) to selenocysteinyl-tRNA(Sec) required for selenoprotein biosynthesis. The protein is L-seryl-tRNA(Sec) selenium transferase of Haemophilus influenzae (strain ATCC 51907 / DSM 11121 / KW20 / Rd).